The sequence spans 335 residues: Fructose-1,6-bisphosphatase class 1 (335 aa).

Residues Glu92, Asp114, Leu116, and Asp117 each contribute to the Mg(2+) site. Residues 117-120 (DGSS), Asn210, Tyr242, and Lys274 each bind substrate. Glu280 serves as a coordination point for Mg(2+).

The protein belongs to the FBPase class 1 family. As to quaternary structure, homotetramer. It depends on Mg(2+) as a cofactor.

The protein resides in the cytoplasm. It catalyses the reaction beta-D-fructose 1,6-bisphosphate + H2O = beta-D-fructose 6-phosphate + phosphate. The protein operates within carbohydrate biosynthesis; gluconeogenesis. This is Fructose-1,6-bisphosphatase class 1 from Lawsonia intracellularis (strain PHE/MN1-00).